We begin with the raw amino-acid sequence, 627 residues long: UvrABC system protein C (627 aa).

Residues 26–105 form the GIY-YIG domain; that stretch reads PEPGVYFMRD…IKQHQPYFNV (80 aa). The UVR domain maps to 215-250; sequence QELIDILSEQMEKAAEALNFEVAARIRDQIAGLKSL.

The protein belongs to the UvrC family. In terms of assembly, interacts with UvrB in an incision complex.

It is found in the cytoplasm. In terms of biological role, the UvrABC repair system catalyzes the recognition and processing of DNA lesions. UvrC both incises the 5' and 3' sides of the lesion. The N-terminal half is responsible for the 3' incision and the C-terminal half is responsible for the 5' incision. In Nostoc sp. (strain PCC 7120 / SAG 25.82 / UTEX 2576), this protein is UvrABC system protein C.